Consider the following 575-residue polypeptide: Alpha-(1,6)-fucosyltransferase (575 aa).

Residues 1-9 are Cytoplasmic-facing; it reads MRPWTGSWR. The helical; Signal-anchor for type II membrane protein transmembrane segment at 10-30 threads the bilayer; the sequence is WIMLILFAWGTLLFYIGGHLV. Over 31–575 the chain is Lumenal; sequence RDNDHSDHSS…KYPTYPEADK (545 aa). 3 disulfides stabilise this stretch: Cys204/Cys266, Cys212/Cys230, and Cys218/Cys222. Residues 206–493 enclose the GT23 domain; that stretch reads KAKKLVCNIN…PDASANFRSL (288 aa). Ser278 is modified (phosphoserine). The SH3-binding motif lies at 299-305; it reads PRPPYLP. The tract at residues 365-366 is important for donor substrate binding; it reads RR. The cysteines at positions 465 and 472 are disulfide-linked. Residues 502 to 563 enclose the SH3 domain; the sequence is PNAHNQIAIY…PSYKVREKIE (62 aa).

Belongs to the glycosyltransferase 23 family. Tyrosine phosphorylated by PKDCC/VLK. In terms of tissue distribution, highest expression in brain.

Its subcellular location is the golgi apparatus. It is found in the golgi stack membrane. It catalyses the reaction N(4)-{beta-D-GlcNAc-(1-&gt;2)-alpha-D-Man-(1-&gt;3)-[beta-D-GlcNAc-(1-&gt;2)-alpha-D-Man-(1-&gt;6)]-beta-D-Man-(1-&gt;4)-beta-D-GlcNAc-(1-&gt;4)-beta-D-GlcNAc}-L-asparaginyl-[protein] + GDP-beta-L-fucose = an N(4)-{beta-D-GlcNAc-(1-&gt;2)-alpha-D-Man-(1-&gt;3)-[beta-D-GlcNAc-(1-&gt;2)-alpha-D-Man-(1-&gt;6)]-beta-D-Man-(1-&gt;4)-beta-D-GlcNAc-(1-&gt;4)-[alpha-L-Fuc-(1-&gt;6)]-beta-D-GlcNAc}-L-asparaginyl-[protein] + GDP + H(+). It functions in the pathway protein modification; protein glycosylation. Its function is as follows. Catalyzes the addition of fucose in alpha 1-6 linkage to the first GlcNAc residue, next to the peptide chains in N-glycans. This is Alpha-(1,6)-fucosyltransferase (FUT8) from Sus scrofa (Pig).